The primary structure comprises 862 residues: DNA mismatch repair protein MutS (862 aa).

Position 608–615 (608–615) interacts with ATP; it reads GPNMAGKS.

Belongs to the DNA mismatch repair MutS family.

This protein is involved in the repair of mismatches in DNA. It is possible that it carries out the mismatch recognition step. This protein has a weak ATPase activity. The polypeptide is DNA mismatch repair protein MutS (Borrelia garinii subsp. bavariensis (strain ATCC BAA-2496 / DSM 23469 / PBi) (Borreliella bavariensis)).